A 94-amino-acid polypeptide reads, in one-letter code: Large ribosomal subunit protein bL25 (94 aa).

The protein belongs to the bacterial ribosomal protein bL25 family. In terms of assembly, part of the 50S ribosomal subunit; part of the 5S rRNA/L5/L18/L25 subcomplex. Contacts the 5S rRNA. Binds to the 5S rRNA independently of L5 and L18.

In terms of biological role, this is one of the proteins that binds to the 5S RNA in the ribosome where it forms part of the central protuberance. This Photorhabdus laumondii subsp. laumondii (strain DSM 15139 / CIP 105565 / TT01) (Photorhabdus luminescens subsp. laumondii) protein is Large ribosomal subunit protein bL25.